The sequence spans 121 residues: MKTLAAFLLLSCLIAGEVNGQDRSSRARCFCVDKGLNMVLLKNLDKVEIFPPSPSCNKHEIVVTLKNGAGQKCLNPDSKFTKNVVLKAIGKRMQQSVPHSTTTGTVKSSMTSSTSAPTAFK.

The signal sequence occupies residues 1-20 (MKTLAAFLLLSCLIAGEVNG). 2 disulfide bridges follow: cysteine 29–cysteine 56 and cysteine 31–cysteine 73. The interval 95–121 (QSVPHSTTTGTVKSSMTSSTSAPTAFK) is disordered. Positions 100–115 (STTTGTVKSSMTSSTS) are enriched in low complexity.

It belongs to the intercrine alpha (chemokine CxC) family.

Its subcellular location is the secreted. In terms of biological role, ligand for cxcr3.2. Chemotactic for macrophages. This is C-X-C motif chemokine 11-6 from Danio rerio (Zebrafish).